A 1415-amino-acid chain; its full sequence is DNA-directed RNA polymerase subunit beta' (1415 aa).

Zn(2+)-binding residues include Cys-214, Cys-294, Cys-301, and Cys-304. A compositionally biased stretch (polar residues) spans 1335–1351 (QNFVDSQGKPQSQSSFI). The disordered stretch occupies residues 1335-1390 (QNFVDSQGKPQSQSSFIDDSMSEFSPVKDKSGSVLDDSDFPPGNFDSDFPADNYDL).

It belongs to the RNA polymerase beta' chain family. RpoC2 subfamily. In cyanobacteria the RNAP catalytic core is composed of 2 alpha, 1 beta, 1 beta', 1 gamma and 1 omega subunit. When a sigma factor is associated with the core the holoenzyme is formed, which can initiate transcription. Zn(2+) is required as a cofactor.

It catalyses the reaction RNA(n) + a ribonucleoside 5'-triphosphate = RNA(n+1) + diphosphate. Functionally, DNA-dependent RNA polymerase catalyzes the transcription of DNA into RNA using the four ribonucleoside triphosphates as substrates. The protein is DNA-directed RNA polymerase subunit beta' of Trichodesmium erythraeum (strain IMS101).